The primary structure comprises 234 residues: Phosphoribosylaminoimidazole-succinocarboxamide synthase (234 aa).

It belongs to the SAICAR synthetase family.

The enzyme catalyses 5-amino-1-(5-phospho-D-ribosyl)imidazole-4-carboxylate + L-aspartate + ATP = (2S)-2-[5-amino-1-(5-phospho-beta-D-ribosyl)imidazole-4-carboxamido]succinate + ADP + phosphate + 2 H(+). Its pathway is purine metabolism; IMP biosynthesis via de novo pathway; 5-amino-1-(5-phospho-D-ribosyl)imidazole-4-carboxamide from 5-amino-1-(5-phospho-D-ribosyl)imidazole-4-carboxylate: step 1/2. The protein is Phosphoribosylaminoimidazole-succinocarboxamide synthase of Staphylococcus carnosus (strain TM300).